A 312-amino-acid chain; its full sequence is Ribosomal protein L11 methyltransferase (312 aa).

S-adenosyl-L-methionine-binding residues include T162, G183, D205, and N248.

Belongs to the methyltransferase superfamily. PrmA family.

It localises to the cytoplasm. The enzyme catalyses L-lysyl-[protein] + 3 S-adenosyl-L-methionine = N(6),N(6),N(6)-trimethyl-L-lysyl-[protein] + 3 S-adenosyl-L-homocysteine + 3 H(+). In terms of biological role, methylates ribosomal protein L11. This is Ribosomal protein L11 methyltransferase from Geobacillus thermodenitrificans (strain NG80-2).